A 689-amino-acid polypeptide reads, in one-letter code: DNA ligase (689 aa).

Residues 40–44, 89–90, and Glu121 each bind NAD(+); these read DSEYD and SL. Residue Lys123 is the N6-AMP-lysine intermediate of the active site. 4 residues coordinate NAD(+): Arg144, Glu179, Lys295, and Lys319. Positions 413, 416, 431, and 437 each coordinate Zn(2+). The region spanning 610–689 is the BRCT domain; it reads REQSGLTDKI…EEWLTLIKNV (80 aa).

Belongs to the NAD-dependent DNA ligase family. LigA subfamily. Requires Mg(2+) as cofactor. Mn(2+) serves as cofactor.

The catalysed reaction is NAD(+) + (deoxyribonucleotide)n-3'-hydroxyl + 5'-phospho-(deoxyribonucleotide)m = (deoxyribonucleotide)n+m + AMP + beta-nicotinamide D-nucleotide.. Functionally, DNA ligase that catalyzes the formation of phosphodiester linkages between 5'-phosphoryl and 3'-hydroxyl groups in double-stranded DNA using NAD as a coenzyme and as the energy source for the reaction. It is essential for DNA replication and repair of damaged DNA. This Rickettsia conorii (strain ATCC VR-613 / Malish 7) protein is DNA ligase.